We begin with the raw amino-acid sequence, 77 residues long: U11-lycotoxin-Ls1b (77 aa).

Residues 1 to 20 (MKLIIFTGLALFAIVSLIEA) form the signal peptide. The propeptide occupies 21–26 (EEESGR).

Belongs to the neurotoxin 19 (CSTX) family. 10 (U11-Lctx) subfamily. In terms of processing, contains 4 disulfide bonds. Expressed by the venom gland.

The protein resides in the secreted. In Lycosa singoriensis (Wolf spider), this protein is U11-lycotoxin-Ls1b.